A 286-amino-acid chain; its full sequence is Oxidoreductase clz15 (286 aa).

Belongs to the asaB hydroxylase/desaturase family.

It participates in secondary metabolite biosynthesis. In terms of biological role, oxidoreductase; part of the gene cluster that mediates the biosynthesis of squalestatin S1 (SQS1, also known as zaragozic acid A), a heavily oxidized fungal polyketide that offers potent cholesterol lowering activity by targeting squalene synthase (SS). SQS1 is composed of a 2,8-dioxobicyclic[3.2.1]octane-3,4,5-tricarboxyclic acid core that is connected to two lipophilic polyketide arms. These initial steps feature the priming of an unusual benzoic acid starter unit onto the highly reducing polyketide synthase clz14, followed by oxaloacetate extension and product release to generate a tricarboxylic acid containing product. The phenylalanine ammonia lyase (PAL) clz10 and the acyl-CoA ligase clz12 are involved in transforming phenylalanine into benzoyl-CoA. The citrate synthase-like protein clz17 is involved in connecting the C-alpha-carbons of the hexaketide chain and oxaloacetate to afford the tricarboxylic acid unit. The potential hydrolytic enzymes, clz11 and clz13, are in close proximity to pks2 and may participate in product release. On the other side, the tetraketide arm is synthesized by a the squalestatin tetraketide synthase clz2 and enzymatically esterified to the core in the last biosynthetic step, by the acetyltransferase clz6. The biosynthesis of the tetraketide must involve 3 rounds of chain extension. After the first and second rounds methyl-transfer occurs, and in all rounds of extension the ketoreductase and dehydratase are active. The enoyl reductase and C-MeT of clz2 are not active in the final round of extension. The acetyltransferase clz6 appears to have a broad substrate selectivity for its acyl CoA substrate, allowing the in vitro synthesis of novel squalestatins. The biosynthesis of SQS1 requires several oxidative steps likely performed by oxidoreductases clz3, clz15 and clz16. Finally, in support of the identification of the cluster as being responsible for SQS1 production, the cluster contains a gene encoding a putative squalene synthase (SS) clz20, suggesting a likely mechanism for self-resistance. The polypeptide is Oxidoreductase clz15 (Cochliobolus lunatus (Filamentous fungus)).